A 3414-amino-acid chain; its full sequence is Genome polyprotein (3414 aa).

Positions 1 to 27 (MAGKAILKGKGGGPPRRVSKETAKKTR) are disordered. Residues 1-98 (MAGKAILKGK…LQKRGKRRST (98 aa)) are Cytoplasmic-facing. Residues 98-116 (TTDWTGWLLVAMLLSIALA) constitute a propeptide, ER anchor for the capsid protein C, removed in mature form by serine protease NS3. The chain crosses the membrane as a helical span at residues 99–119 (TDWTGWLLVAMLLSIALAATV). Residues 120–242 (RKEGDGTTVI…HLTRVEGWVW (123 aa)) are Extracellular-facing. Residue N144 is glycosylated (N-linked (GlcNAc...) asparagine; by host). The helical transmembrane segment at 243 to 260 (KNKSLTLAVVVIVWMTVE) threads the bilayer. A topological domain (cytoplasmic) is located at residue S261. The chain crosses the membrane as a helical span at residues 262-280 (AVTRIVIVSALLCLAPAYA). Topologically, residues 281 to 727 (SRCTHLENRD…HTVLGGAFNS (447 aa)) are extracellular. Cystine bridges form between C283–C310, C340–C396, C340–C401, C354–C385, C372–C396, and C372–C401. The fusion peptide stretch occupies residues 378–391 (DRGWGNHCGLFGKG). Residue N434 is glycosylated (N-linked (GlcNAc...) asparagine; by host). 2 cysteine pairs are disulfide-bonded: C466/C570 and C587/C618. The chain crosses the membrane as a helical span at residues 728 to 748 (VFGGVGFLPRILLGISLAWLG). The Cytoplasmic segment spans residues 749–755 (LNMRNPT). A helical membrane pass occupies residues 756–776 (MSMSFLLAGGLVLTMTLGVGA). The Extracellular segment spans residues 777–1132 (DVGCAVDTER…RSMVVADNGE (356 aa)). 6 disulfide bridges follow: C780-C791, C831-C920, C955-C1000, C1057-C1106, C1068-C1090, and C1089-C1093. N-linked (GlcNAc...) asparagine; by host glycans are attached at residues N861, N983, and N999. Residues 1133–1153 (LLSEGGIPGIVAVFVVLEYII) traverse the membrane as a helical segment. The Cytoplasmic portion of the chain corresponds to 1154–1158 (RKRPS). The helical transmembrane segment at 1159-1179 (AGLTVVWGGVVVLALLVTGMV) threads the bilayer. The Lumenal segment spans residues 1180-1187 (TLQSMLRY). The chain crosses the membrane as a helical span at residues 1188-1208 (VIAVGVTFHLELGPEIVALML). The Cytoplasmic portion of the chain corresponds to 1209–1236 (LQAVFELRVGLLGAFVLRRSLTTREVVT). Residues 1237–1257 (IYFLLLVLELGLPSANLEALW) traverse the membrane as a helical segment. Residues 1258-1293 (GWADALAMGAMIFRACTAEGKTGLGLLLVALMTQQN) are Lumenal-facing. The chain crosses the membrane as a helical span at residues 1294-1314 (AVIVHQGLVIFLSVASACSVW). Residues 1315 to 1363 (KLLRGQREQKGLSWIVPLAGRLGGKGSGIRLLAFWELASRRDRRSFSEP) are Cytoplasmic-facing. Residues 1364 to 1381 (LTVVGVMLTLASGMMRHT) form a helical membrane-spanning segment. A topological domain (lumenal) is located at residue S1382. Residues 1383–1403 (QEALCALAAASFLLLMLVLGT) traverse the membrane as a helical segment. Residues 1404–1454 (RKMQLVAEWSGCVEWHPDLADEGGEISLRVRQDALGNFHLTELEKEERMMA) are Cytoplasmic-facing. The segment at 1410 to 1449 (AEWSGCVEWHPDLADEGGEISLRVRQDALGNFHLTELEKE) is interacts with and activates NS3 protease. Positions 1455-1475 (FWLLAGLTASALHWTGILVVM) form an intramembrane region, helical. The Cytoplasmic portion of the chain corresponds to 1476–2160 (GLWTMSEMLR…KMAERDAPEA (685 aa)). The Peptidase S7 domain occupies 1490–1669 (SDLVFSGQSG…EVEKSRPNLP (180 aa)). Residues H1543, D1567, and S1627 each act as charge relay system; for serine protease NS3 activity in the active site. A Helicase ATP-binding domain is found at 1675 to 1831 (TGWTSKGTIT…ESNGAITSEE (157 aa)). 1688–1695 (MHPGSGKT) serves as a coordination point for ATP. Residues 1779–1782 (DEAH) carry the DEAH box motif. The 160-residue stretch at 1841 to 2000 (DGFDWITEYE…TLRGPVATFY (160 aa)) folds into the Helicase C-terminal domain. Position 1883 is an N6-acetyllysine; by host (K1883). A helical transmembrane segment spans residues 2161 to 2181 (FLTMVEMVVLGLATLGAVWCL). Residues 2182–2189 (VLRTSISR) are Lumenal-facing. Positions 2190–2210 (MMLGTMVLLVSLALLWAGGVG) form an intramembrane region, helical. Position 2211 (Y2211) is a topological domain, lumenal. Residues 2212–2232 (GSMAGVALVFYTLLTVLQPEA) traverse the membrane as a helical segment. The Cytoplasmic segment spans residues 2233–2244 (GKQRSSDDNKLA). The chain crosses the membrane as a helical span at residues 2245-2265 (YFLLTLCSLAGLVAANEMGFL). At 2266-2299 (EKTKADLSAVLWSEREEPRVWSEWTNIDIQPAKS) the chain is on the lumenal side. The segment at residues 2300–2320 (WGTYVLVVSLFTPYIIHQLQT) is an intramembrane region (helical). At 2321 to 2343 (RIQQLVNSAVASGAQAMRDLGGG) the chain is on the lumenal side. Residues 2344–2364 (TPFFGVAGHVLTLGVVSLVGA) constitute an intramembrane region (helical). The Lumenal portion of the chain corresponds to 2365 to 2368 (TPTS). A helical transmembrane segment spans residues 2369 to 2389 (LVVGVGLAAFHLAIVVSGLEA). The Cytoplasmic portion of the chain corresponds to 2390-2432 (ELTQRAHKVFFSAMVRNPMVDGDVINPFGDGEVKPALYERKMS). A helical transmembrane segment spans residues 2433-2453 (LILAMILCFMSVVLNRTVPAV). The Lumenal portion of the chain corresponds to 2454-2477 (TEASAVGLAAAGQLIRPEADTLWT). The chain crosses the membrane as a helical span at residues 2478-2498 (MPVACGLSGVVRGSLWGFLPL). Over 2499-3414 (GHRLWLRTSG…WELKVESSII (916 aa)) the chain is Cytoplasmic. The 265-residue stretch at 2512-2776 (GGSEGDTLGD…EMDLGVGTRC (265 aa)) folds into the mRNA cap 0-1 NS5-type MT domain. S2567 contacts S-adenosyl-L-methionine. The residue at position 2567 (S2567) is a Phosphoserine. K2572 acts as the For 2'-O-MTase activity in catalysis. 5 residues coordinate S-adenosyl-L-methionine: G2597, W2598, T2615, I2616, and V2643. The For 2'-O-MTase activity role is filled by D2657. I2658 provides a ligand contact to S-adenosyl-L-methionine. Catalysis depends on for 2'-O-MTase activity residues K2694 and E2730. The interaction with host SCRIB stretch occupies residues 2730 to 2734 (EMYYS). Y2732 is a binding site for S-adenosyl-L-methionine. Zn(2+) is bound by residues E2950, H2954, C2959, and C2962. Residues 3040 to 3189 (GLFYADDTAG…RPIDDRFSKA (150 aa)) enclose the RdRp catalytic domain. 3 residues coordinate Zn(2+): H3224, C3240, and C3359.

The protein in the N-terminal section; belongs to the class I-like SAM-binding methyltransferase superfamily. mRNA cap 0-1 NS5-type methyltransferase family. As to quaternary structure, homodimer. Forms heterodimers with envelope protein E in the endoplasmic reticulum and Golgi. In terms of assembly, homodimer; in the endoplasmic reticulum and Golgi. As to quaternary structure, forms homodimers as well as homohexamers. NS1 may interact with NS4A. Forms a heterodimer with serine protease NS3. May form homooligomers. In terms of assembly, forms a heterodimer with NS2B. Interacts with NS4B. Interacts with unphosphorylated RNA-directed RNA polymerase NS5; this interaction stimulates RNA-directed RNA polymerase NS5 guanylyltransferase activity. As to quaternary structure, interacts with serine protease NS3. Interacts with host STAT2; this interaction inhibits the phosphorylation of the latter, and, when all viral proteins are present (polyprotein), targets STAT2 for degradation. In terms of processing, specific enzymatic cleavages in vivo yield mature proteins. Cleavages in the lumen of endoplasmic reticulum are performed by host signal peptidase, whereas cleavages in the cytoplasmic side are performed by serine protease NS3. Signal cleavage at the 2K-4B site requires a prior NS3 protease-mediated cleavage at the 4A-2K site. Post-translationally, cleaved in post-Golgi vesicles by a host furin, releasing the mature small envelope protein M, and peptide pr. This cleavage is incomplete as up to 30% of viral particles still carry uncleaved prM. N-glycosylated. In terms of processing, N-glycosylated. The excreted form is glycosylated and this is required for efficient secretion of the protein from infected cells. Post-translationally, acetylated by host KAT5. Acetylation modulates NS3 RNA-binding and unwinding activities and plays an important positive role for viral replication. Phosphorylated on serines residues. This phosphorylation may trigger NS5 nuclear localization.

The protein resides in the virion. The protein localises to the host nucleus. It is found in the host cytoplasm. It localises to the host perinuclear region. Its subcellular location is the secreted. The protein resides in the virion membrane. The protein localises to the host endoplasmic reticulum membrane. The catalysed reaction is Selective hydrolysis of -Xaa-Xaa-|-Yaa- bonds in which each of the Xaa can be either Arg or Lys and Yaa can be either Ser or Ala.. The enzyme catalyses RNA(n) + a ribonucleoside 5'-triphosphate = RNA(n+1) + diphosphate. It carries out the reaction a ribonucleoside 5'-triphosphate + H2O = a ribonucleoside 5'-diphosphate + phosphate + H(+). It catalyses the reaction ATP + H2O = ADP + phosphate + H(+). The catalysed reaction is a 5'-end (5'-triphosphoguanosine)-ribonucleoside in mRNA + S-adenosyl-L-methionine = a 5'-end (N(7)-methyl 5'-triphosphoguanosine)-ribonucleoside in mRNA + S-adenosyl-L-homocysteine. The enzyme catalyses a 5'-end (N(7)-methyl 5'-triphosphoguanosine)-ribonucleoside in mRNA + S-adenosyl-L-methionine = a 5'-end (N(7)-methyl 5'-triphosphoguanosine)-(2'-O-methyl-ribonucleoside) in mRNA + S-adenosyl-L-homocysteine + H(+). Its function is as follows. Plays a role in virus budding by binding to the cell membrane and gathering the viral RNA into a nucleocapsid that forms the core of a mature virus particle. During virus entry, may induce genome penetration into the host cytoplasm after hemifusion induced by the surface proteins. Can migrate to the cell nucleus where it modulates host functions. Functionally, inhibits RNA silencing by interfering with host Dicer. In terms of biological role, prevents premature fusion activity of envelope proteins in trans-Golgi by binding to envelope protein E at pH6.0. After virion release in extracellular space, gets dissociated from E dimers. Acts as a chaperone for envelope protein E during intracellular virion assembly by masking and inactivating envelope protein E fusion peptide. prM is the only viral peptide matured by host furin in the trans-Golgi network probably to avoid catastrophic activation of the viral fusion activity in acidic Golgi compartment prior to virion release. prM-E cleavage is inefficient, and many virions are only partially matured. These uncleaved prM would play a role in immune evasion. Its function is as follows. May play a role in virus budding. Exerts cytotoxic effects by activating a mitochondrial apoptotic pathway through M ectodomain. May display a viroporin activity. Functionally, binds to host cell surface receptor and mediates fusion between viral and cellular membranes. Envelope protein is synthesized in the endoplasmic reticulum in the form of heterodimer with protein prM. They play a role in virion budding in the ER, and the newly formed immature particle is covered with 60 spikes composed of heterodimer between precursor prM and envelope protein E. The virion is transported to the Golgi apparatus where the low pH causes dissociation of PrM-E heterodimers and formation of E homodimers. prM-E cleavage is inefficient, and many virions are only partially matured. These uncleaved prM would play a role in immune evasion. In terms of biological role, involved in immune evasion, pathogenesis and viral replication. Once cleaved off the polyprotein, is targeted to three destinations: the viral replication cycle, the plasma membrane and the extracellular compartment. Essential for viral replication. Required for formation of the replication complex and recruitment of other non-structural proteins to the ER-derived membrane structures. Excreted as a hexameric lipoparticle that plays a role against host immune response. Antagonizing the complement function. Binds to the host macrophages and dendritic cells. Inhibits signal transduction originating from Toll-like receptor 3 (TLR3). Component of the viral RNA replication complex that functions in virion assembly and antagonizes the host immune response. Its function is as follows. Required cofactor for the serine protease function of NS3. May have membrane-destabilizing activity and form viroporins. Functionally, displays three enzymatic activities: serine protease, NTPase and RNA helicase. NS3 serine protease, in association with NS2B, performs its autocleavage and cleaves the polyprotein at dibasic sites in the cytoplasm: C-prM, NS2A-NS2B, NS2B-NS3, NS3-NS4A, NS4A-2K and NS4B-NS5. NS3 RNA helicase binds RNA and unwinds dsRNA in the 3' to 5' direction. In terms of biological role, regulates the ATPase activity of the NS3 helicase activity. NS4A allows NS3 helicase to conserve energy during unwinding. Functions as a signal peptide for NS4B and is required for the interferon antagonism activity of the latter. Its function is as follows. Induces the formation of ER-derived membrane vesicles where the viral replication takes place. Inhibits interferon (IFN)-induced host STAT1 phosphorylation and nuclear translocation, thereby preventing the establishment of cellular antiviral state by blocking the IFN-alpha/beta pathway. Inhibits STAT2 translocation in the nucleus after IFN-alpha treatment. Functionally, replicates the viral (+) and (-) RNA genome, and performs the capping of genomes in the cytoplasm. NS5 methylates viral RNA cap at guanine N-7 and ribose 2'-O positions. Besides its role in RNA genome replication, also prevents the establishment of cellular antiviral state by blocking the interferon-alpha/beta (IFN-alpha/beta) signaling pathway. Inhibits host TYK2 and STAT2 phosphorylation, thereby preventing activation of JAK-STAT signaling pathway. The chain is Genome polyprotein from Homo sapiens (Human).